The chain runs to 159 residues: Endoribonuclease YbeY (159 aa).

Zn(2+) contacts are provided by His-122, His-126, and His-132.

This sequence belongs to the endoribonuclease YbeY family. Zn(2+) is required as a cofactor.

The protein localises to the cytoplasm. Functionally, single strand-specific metallo-endoribonuclease involved in late-stage 70S ribosome quality control and in maturation of the 3' terminus of the 16S rRNA. This is Endoribonuclease YbeY from Roseiflexus castenholzii (strain DSM 13941 / HLO8).